A 407-amino-acid chain; its full sequence is Probable tRNA sulfurtransferase (407 aa).

The region spanning 61 to 165 (NEITYRLSKI…LDAIYMYEEV (105 aa)) is the THUMP domain. Residues 183–184 (ML), 208–209 (HF), R265, G287, and Q296 each bind ATP.

It belongs to the ThiI family.

The protein localises to the cytoplasm. The catalysed reaction is [ThiI sulfur-carrier protein]-S-sulfanyl-L-cysteine + a uridine in tRNA + 2 reduced [2Fe-2S]-[ferredoxin] + ATP + H(+) = [ThiI sulfur-carrier protein]-L-cysteine + a 4-thiouridine in tRNA + 2 oxidized [2Fe-2S]-[ferredoxin] + AMP + diphosphate. It carries out the reaction [ThiS sulfur-carrier protein]-C-terminal Gly-Gly-AMP + S-sulfanyl-L-cysteinyl-[cysteine desulfurase] + AH2 = [ThiS sulfur-carrier protein]-C-terminal-Gly-aminoethanethioate + L-cysteinyl-[cysteine desulfurase] + A + AMP + 2 H(+). Its pathway is cofactor biosynthesis; thiamine diphosphate biosynthesis. Functionally, catalyzes the ATP-dependent transfer of a sulfur to tRNA to produce 4-thiouridine in position 8 of tRNAs, which functions as a near-UV photosensor. Also catalyzes the transfer of sulfur to the sulfur carrier protein ThiS, forming ThiS-thiocarboxylate. This is a step in the synthesis of thiazole, in the thiamine biosynthesis pathway. The sulfur is donated as persulfide by IscS. This is Probable tRNA sulfurtransferase from Staphylococcus aureus (strain JH1).